We begin with the raw amino-acid sequence, 388 residues long: Quinolone resistance protein NorA (388 aa).

12 helical membrane-spanning segments follow: residues 5–25 (IFVLYFNIFLIFLGIGLVIPV), 42–62 (LLVAAFALSQMIISPFGGTLA), 69–89 (LIICIGLILFSVSEFMFAVGH), 99–119 (VIGGMSAGMVMPGVTGLIADV), 129–149 (FGYMSAIINSGFILGPGIGGF), 157–177 (MPFYFAGALGILAFIMSVVLI), 201–221 (WKVFITPAILTLVLAFGLSAF), 239–259 (DISIAITGGGIFGALFQIYFF), 269–289 (LTFIAWSLIYSVIVLVLLVIA), 293–313 (WTIMVISFAVFIGFDMIRPAI), 331–351 (LNSTFTSMGNFIGPLIAGALF), and 355–375 (IEAPIYMAIGVSLAGVVIVLI).

Belongs to the major facilitator superfamily. TCR/Tet family.

The protein localises to the cell membrane. Functionally, involved in quinolone resistance. May constitute a membrane-associated active efflux pump of hydrophilic quinolones. In Staphylococcus aureus (strain MRSA252), this protein is Quinolone resistance protein NorA (norA).